Consider the following 441-residue polypeptide: Malate dehydrogenase [NADP], chloroplastic (441 aa).

A chloroplast-targeting transit peptide spans 1–51 (MAVAELSPSYKTQLKTCQQLSSSLSTRLSDHRKFSLRLLPRPVSVRGGIRC). Cysteine 75 and cysteine 80 form a disulfide bridge. Residue 104 to 110 (GAAGMIS) participates in NADP(+) binding. Arginine 185 and arginine 191 together coordinate substrate. NADP(+) is bound at residue asparagine 198. Glutamine 205 provides a ligand contact to NAD(+). 222–224 (VGN) contacts NADP(+). Residues asparagine 224 and arginine 255 each contribute to the substrate site. Catalysis depends on histidine 280, which acts as the Proton acceptor. A disulfide bond links cysteine 416 and cysteine 428.

The protein belongs to the LDH/MDH superfamily. MDH type 2 family. As to quaternary structure, homodimer.

Its subcellular location is the plastid. It is found in the chloroplast. The enzyme catalyses (S)-malate + NADP(+) = oxaloacetate + NADPH + H(+). With respect to regulation, chloroplast NADP-MDH is activated upon illumination. In order to be enzymatically active, disulfide bridges on the protein must be reduced by thioredoxin which receives electrons from ferredoxin and the electron transport system of photosynthesis. Functionally, the chloroplastic, NADP-dependent form is essential for the photosynthesis C4 cycle, which allows plants to circumvent the problem of photorespiration. In C4 plants, NADP-MDH activity acts to convert oxaloacetate to malate in chloroplasts of mesophyll cells for transport to the bundle sheath cells. In Mesembryanthemum crystallinum (Common ice plant), this protein is Malate dehydrogenase [NADP], chloroplastic (MDH1).